The following is an 87-amino-acid chain: NADH dehydrogenase [ubiquinone] 1 alpha subcomplex subunit 4-like 2 (87 aa).

Belongs to the complex I NDUFA4 subunit family.

The polypeptide is NADH dehydrogenase [ubiquinone] 1 alpha subcomplex subunit 4-like 2 (NDUFA4L2) (Bos taurus (Bovine)).